A 536-amino-acid chain; its full sequence is Phosphoenolpyruvate carboxykinase (ATP) (536 aa).

Substrate contacts are provided by arginine 61, tyrosine 195, and lysine 201. ATP-binding positions include lysine 201, histidine 220, and 236 to 244 (GLSGTGKTT). Lysine 201 and histidine 220 together coordinate Mn(2+). Position 257 (aspartate 257) interacts with Mn(2+). ATP-binding residues include glutamate 285, arginine 322, and threonine 447. Arginine 322 contributes to the substrate binding site.

This sequence belongs to the phosphoenolpyruvate carboxykinase (ATP) family. Requires Mn(2+) as cofactor.

It is found in the cytoplasm. It carries out the reaction oxaloacetate + ATP = phosphoenolpyruvate + ADP + CO2. It participates in carbohydrate biosynthesis; gluconeogenesis. Involved in the gluconeogenesis. Catalyzes the conversion of oxaloacetate (OAA) to phosphoenolpyruvate (PEP) through direct phosphoryl transfer between the nucleoside triphosphate and OAA. This is Phosphoenolpyruvate carboxykinase (ATP) from Brucella melitensis biotype 1 (strain ATCC 23456 / CCUG 17765 / NCTC 10094 / 16M).